Consider the following 139-residue polypeptide: 10 kDa chaperonin 2, chloroplastic (139 aa).

The transit peptide at 1-39 (MASTFVCSLPNPFFAFPVKATTPSTANHTLLGSRRGCLR) directs the protein to the chloroplast. The cpn-10 domain stretch occupies residues 51–138 (KVVPQADRVL…CKESDLLALV (88 aa)).

Belongs to the GroES chaperonin family. In terms of tissue distribution, expressed in leaves and stems. Expressed at low levels in germinating seeds, seedlings, rosettes leaves, flowers and siliques.

The protein localises to the plastid. Its subcellular location is the chloroplast stroma. In terms of biological role, functions as a co-chaperone for protein folding in chloroplasts. The sequence is that of 10 kDa chaperonin 2, chloroplastic from Arabidopsis thaliana (Mouse-ear cress).